Consider the following 602-residue polypeptide: Elongation factor 4 (602 aa).

The region spanning 6 to 188 (DHIRNFSIVA…AIVNKLPAPK (183 aa)) is the tr-type G domain. GTP-binding positions include 18-23 (DHGKST) and 135-138 (NKID).

This sequence belongs to the TRAFAC class translation factor GTPase superfamily. Classic translation factor GTPase family. LepA subfamily.

It is found in the cell inner membrane. It catalyses the reaction GTP + H2O = GDP + phosphate + H(+). Functionally, required for accurate and efficient protein synthesis under certain stress conditions. May act as a fidelity factor of the translation reaction, by catalyzing a one-codon backward translocation of tRNAs on improperly translocated ribosomes. Back-translocation proceeds from a post-translocation (POST) complex to a pre-translocation (PRE) complex, thus giving elongation factor G a second chance to translocate the tRNAs correctly. Binds to ribosomes in a GTP-dependent manner. This chain is Elongation factor 4, found in Brucella melitensis biotype 2 (strain ATCC 23457).